A 462-amino-acid polypeptide reads, in one-letter code: MGKTLFDKLWNRHVIYGKEGEPQLLYVDLHLIHEVTSPQAFEGLRMENRPLRRPDKTFATMDHNVPTEDIFNIQDLVAKKQIEALQTNCAEFGVTLADMGSDRQGIVHMVGPETGLTQPGKVIVCGDSHTATHGAFGAIGFGIGSSEVEHVFATQTIWQQKPKSMGIEIKGKLPKGVYAKDIILHLIATYGVAFGTGYAVEYYGETIQNMSMEERMTICNMAIEGGAKMGMMAPDETTFEYVRGREYAPTDMEKAISDWKTLQTDPDAEYDLHIEMDASTLEPYVTWGTNPEMGVPFSRAFPEIKDMNYERAYEYMGLKPGQKAEQIELGYVFIGSCTNARLSDLEEAARIVKGNKVKNNIRALVVPGSRQVRNAAESIGLDKIFIAAGFEWREPGCSMCLGMNPDQVPDGVHCASTSNRNFEGRQGKGARTHLVSPAMAAAAAINGHFIDIRKEAVISGGN.

C337, C397, and C400 together coordinate [4Fe-4S] cluster.

The protein belongs to the aconitase/IPM isomerase family. LeuC type 1 subfamily. Heterodimer of LeuC and LeuD. It depends on [4Fe-4S] cluster as a cofactor.

The catalysed reaction is (2R,3S)-3-isopropylmalate = (2S)-2-isopropylmalate. Its pathway is amino-acid biosynthesis; L-leucine biosynthesis; L-leucine from 3-methyl-2-oxobutanoate: step 2/4. Catalyzes the isomerization between 2-isopropylmalate and 3-isopropylmalate, via the formation of 2-isopropylmaleate. The protein is 3-isopropylmalate dehydratase large subunit of Listeria welshimeri serovar 6b (strain ATCC 35897 / DSM 20650 / CCUG 15529 / CIP 8149 / NCTC 11857 / SLCC 5334 / V8).